The chain runs to 582 residues: Poly(A) RNA polymerase, mitochondrial (582 aa).

The transit peptide at 1-37 (MAVPGVGLLTRLNLCARRRTRVQRPIVRLLSCPGTVA) directs the protein to the mitochondrion. N6-acetyllysine is present on Lys90. Residues 107–109 (YES) and 241–242 (GC) contribute to the ATP site. Residues Asp243 and Asp245 each coordinate Mg(2+). Residues 437–483 (LELLLKEFFEYFGNFAFDKNSINIRQGREQNKPDSSPLYIQNPFETS) enclose the PAP-associated domain.

Belongs to the DNA polymerase type-B-like family. As to quaternary structure, homodimer. Mg(2+) is required as a cofactor. The cofactor is Mn(2+). Ubiquitous, with stronger expression in tissues with high energy requirements: heart, brain, and skeletal muscle.

The protein localises to the cytoplasm. It is found in the mitochondrion. The enzyme catalyses RNA(n) + ATP = RNA(n)-3'-adenine ribonucleotide + diphosphate. Polymerase that creates the 3' poly(A) tail of mitochondrial transcripts. Can use all four nucleotides, but has higher activity with ATP and UTP (in vitro). Plays a role in replication-dependent histone mRNA degradation. May be involved in the terminal uridylation of mature histone mRNAs before their degradation is initiated. Might be responsible for the creation of some UAA stop codons which are not encoded in mtDNA. This is Poly(A) RNA polymerase, mitochondrial (MTPAP) from Homo sapiens (Human).